Reading from the N-terminus, the 343-residue chain is Protein RecA (343 aa).

66–73 (GPESSGKT) is a binding site for ATP.

The protein belongs to the RecA family.

The protein resides in the cytoplasm. Functionally, can catalyze the hydrolysis of ATP in the presence of single-stranded DNA, the ATP-dependent uptake of single-stranded DNA by duplex DNA, and the ATP-dependent hybridization of homologous single-stranded DNAs. It interacts with LexA causing its activation and leading to its autocatalytic cleavage. The sequence is that of Protein RecA from Rickettsia conorii (strain ATCC VR-613 / Malish 7).